The primary structure comprises 201 residues: Endoribonuclease YbeY (201 aa).

The Zn(2+) site is built by His120, His124, and His130. Residues 151 to 201 are disordered; that stretch reads DGADGADGADGARGAADGAADGGEGRRGDQGRRGDQGRGGGAGEPPAAPAR. The span at 173–186 shows a compositional bias: basic and acidic residues; it reads GEGRRGDQGRRGDQ.

Belongs to the endoribonuclease YbeY family. Zn(2+) is required as a cofactor.

It is found in the cytoplasm. In terms of biological role, single strand-specific metallo-endoribonuclease involved in late-stage 70S ribosome quality control and in maturation of the 3' terminus of the 16S rRNA. This Frankia casuarinae (strain DSM 45818 / CECT 9043 / HFP020203 / CcI3) protein is Endoribonuclease YbeY.